The following is a 574-amino-acid chain: Adenine deaminase (574 aa).

This sequence belongs to the metallo-dependent hydrolases superfamily. Adenine deaminase family. It depends on Mn(2+) as a cofactor.

The enzyme catalyses adenine + H2O + H(+) = hypoxanthine + NH4(+). The sequence is that of Adenine deaminase from Thermosipho melanesiensis (strain DSM 12029 / CIP 104789 / BI429).